The following is a 210-amino-acid chain: uncharacterized protein (210 aa).

Residues 1 to 21 (MLKMNVKKALVILVALALVAA) form the signal peptide.

This is an uncharacterized protein from Archaeoglobus fulgidus (strain ATCC 49558 / DSM 4304 / JCM 9628 / NBRC 100126 / VC-16).